Reading from the N-terminus, the 452-residue chain is Pup--protein ligase (452 aa).

Glu-9 serves as a coordination point for Mg(2+). Residue Arg-53 participates in ATP binding. Tyr-55 contributes to the Mg(2+) binding site. Asp-57 functions as the Proton acceptor in the catalytic mechanism. Glu-63 contributes to the Mg(2+) binding site. ATP-binding residues include Thr-66 and Trp-419.

It belongs to the Pup ligase/Pup deamidase family. Pup-conjugating enzyme subfamily.

It carries out the reaction ATP + [prokaryotic ubiquitin-like protein]-L-glutamate + [protein]-L-lysine = ADP + phosphate + N(6)-([prokaryotic ubiquitin-like protein]-gamma-L-glutamyl)-[protein]-L-lysine.. The protein operates within protein degradation; proteasomal Pup-dependent pathway. It functions in the pathway protein modification; protein pupylation. Catalyzes the covalent attachment of the prokaryotic ubiquitin-like protein modifier Pup to the proteasomal substrate proteins, thereby targeting them for proteasomal degradation. This tagging system is termed pupylation. The ligation reaction involves the side-chain carboxylate of the C-terminal glutamate of Pup and the side-chain amino group of a substrate lysine. The protein is Pup--protein ligase of Mycobacterium ulcerans (strain Agy99).